The following is a 207-amino-acid chain: Vexin (207 aa).

A disordered region spans residues 55–102; the sequence is LELLPHRGDRRDPGDGRRFGRLQTARPPTAHPAKASARPVGISEPKTS. Basic and acidic residues predominate over residues 58–72; it reads LPHRGDRRDPGDGRR.

This sequence belongs to the vexin family.

The protein resides in the cell membrane. It localises to the nucleus. Its function is as follows. Required for neurogenesis in the neural plate and retina. Strongly cooperates with neural bHLH factors to promote neurogenesis. The sequence is that of Vexin from Pongo abelii (Sumatran orangutan).